Consider the following 391-residue polypeptide: Autophagy-related protein 18d (391 aa).

Residues Met-1–Gly-24 are disordered. 4 WD repeats span residues Ser-31–Arg-69, Asp-74–Glu-118, Ala-203–Glu-243, and Val-248–Asp-287.

Belongs to the WD repeat PROPPIN family. In terms of assembly, component of the PI(3,5)P2 regulatory complex at least composed of ATG18, SAC/FIG4, FAB1 and VAC14. As to expression, expressed in roots, stems, flowers and leaves.

It is found in the preautophagosomal structure membrane. The protein localises to the vacuole membrane. The PI(3,5)P2 regulatory complex regulates both the synthesis and turnover of phosphatidylinositol 3,5-bisphosphate (PtdIns(3,5)P2). Required for autophagy. In Arabidopsis thaliana (Mouse-ear cress), this protein is Autophagy-related protein 18d (ATG18D).